A 227-amino-acid chain; its full sequence is UPF0758 protein PG_0894 (227 aa).

An MPN domain is found at 104–227; the sequence is SITDSRMAYR…YFSFADEGLL (124 aa). Zn(2+)-binding residues include histidine 175, histidine 177, and aspartate 188. Residues 175 to 188 carry the JAMM motif motif; the sequence is HNHPSGTVRPSEQD.

The protein belongs to the UPF0758 family.

The protein is UPF0758 protein PG_0894 of Porphyromonas gingivalis (strain ATCC BAA-308 / W83).